Reading from the N-terminus, the 306-residue chain is Phosphatidate cytidylyltransferase (306 aa).

The interval 1 to 28 is disordered; it reads MTTNDAGTGNPAEQPARGAKQQPATETS. A run of 8 helical transmembrane segments spans residues 36 to 56, 82 to 102, 103 to 123, 151 to 171, 180 to 200, 218 to 238, 241 to 261, and 285 to 305; these read AAIVVGLSIGLVLIAVLVFVP, GYLIPVIPLLIGGQAAVWLTW, PFGAVGALAGFGGMVVVCMIW, ATVFLAVWVPLFCSFGAMLVY, FCMMIAVIASDVGGYAVGVLF, FAGSLVCGITATIITATFLVG, PWIGALLGVLFVLTTALGDLV, and MDRLDGILPSAVAAWIVLTLL.

It belongs to the CDS family.

It localises to the cell membrane. It catalyses the reaction a 1,2-diacyl-sn-glycero-3-phosphate + CTP + H(+) = a CDP-1,2-diacyl-sn-glycerol + diphosphate. It participates in phospholipid metabolism; CDP-diacylglycerol biosynthesis; CDP-diacylglycerol from sn-glycerol 3-phosphate: step 3/3. This is Phosphatidate cytidylyltransferase (cdsA) from Mycobacterium bovis (strain ATCC BAA-935 / AF2122/97).